The following is a 245-amino-acid chain: Pyridoxine 5'-phosphate synthase (245 aa).

Asparagine 9 contributes to the 3-amino-2-oxopropyl phosphate binding site. Residue aspartate 11–histidine 12 coordinates 1-deoxy-D-xylulose 5-phosphate. Position 20 (arginine 20) interacts with 3-amino-2-oxopropyl phosphate. Histidine 45 serves as the catalytic Proton acceptor. Residues arginine 47 and histidine 52 each coordinate 1-deoxy-D-xylulose 5-phosphate. Glutamate 72 functions as the Proton acceptor in the catalytic mechanism. Threonine 102 lines the 1-deoxy-D-xylulose 5-phosphate pocket. Residue histidine 193 is the Proton donor of the active site. 3-amino-2-oxopropyl phosphate contacts are provided by residues glycine 194 and glycine 215–histidine 216.

This sequence belongs to the PNP synthase family. As to quaternary structure, homooctamer; tetramer of dimers.

It is found in the cytoplasm. The catalysed reaction is 3-amino-2-oxopropyl phosphate + 1-deoxy-D-xylulose 5-phosphate = pyridoxine 5'-phosphate + phosphate + 2 H2O + H(+). The protein operates within cofactor biosynthesis; pyridoxine 5'-phosphate biosynthesis; pyridoxine 5'-phosphate from D-erythrose 4-phosphate: step 5/5. In terms of biological role, catalyzes the complicated ring closure reaction between the two acyclic compounds 1-deoxy-D-xylulose-5-phosphate (DXP) and 3-amino-2-oxopropyl phosphate (1-amino-acetone-3-phosphate or AAP) to form pyridoxine 5'-phosphate (PNP) and inorganic phosphate. The polypeptide is Pyridoxine 5'-phosphate synthase (Shewanella oneidensis (strain ATCC 700550 / JCM 31522 / CIP 106686 / LMG 19005 / NCIMB 14063 / MR-1)).